Consider the following 708-residue polypeptide: Transcriptional regulator nsrM (708 aa).

The zn(2)-C6 fungal-type DNA-binding region spans C37–C63.

The protein localises to the nucleus. Transcriptional regulator; part of the gene cluster that mediates the biosynthesis of the tetrahydroxanthone dimer neosartorin, which exhibits antibacterial activity. The chain is Transcriptional regulator nsrM from Aspergillus novofumigatus (strain IBT 16806).